The chain runs to 248 residues: PF03932 family protein CutC (248 aa).

This sequence belongs to the CutC family. Homodimer.

The protein localises to the cytoplasm. In Salmonella schwarzengrund (strain CVM19633), this protein is PF03932 family protein CutC.